Reading from the N-terminus, the 183-residue chain is Protein jagunal homolog 1 (183 aa).

At 1-39 (MASRAGPRAAGTDGSDFQHRERVAMHYQMSVTLKYEIKK) the chain is on the cytoplasmic side. Serine 3 is modified (phosphoserine). A helical membrane pass occupies residues 40–60 (LIYVHLVIWLLLVAKMSVGHL). Residues 61 to 71 (RLLSHDQVAMP) lie on the Lumenal side of the membrane. The chain crosses the membrane as a helical span at residues 72–92 (YQWEYPYLLSVVPSLLGLLSF). Topologically, residues 93–96 (PRNN) are cytoplasmic. Residues 97–117 (ISYLVLSMISMGLFSIAPLIY) form a helical membrane-spanning segment. Residues 118 to 137 (GSMEMFPAAQQLYRHGKAYR) are Lumenal-facing. The chain crosses the membrane as a helical span at residues 138–158 (FLFGFSAVSVMYLVLVLAVQV). At 159-183 (HAWQLYYSKKLLDSWFTSTQEKKRK) the chain is on the cytoplasmic side.

Belongs to the jagunal family. As to quaternary structure, interacts with COPA, COPB2 and COPG2.

It localises to the endoplasmic reticulum membrane. In terms of biological role, endoplasmic reticulum transmembrane protein involved in vesicle-mediated transport, which is required for neutrophil function. Required for vesicle-mediated transport; it is however unclear whether it is involved in early secretory pathway or intracellular protein transport. Acts as a regulator of neutrophil function, probably via its role in vesicle-mediated transport: required for defense against fungal pathogens and for granulocyte colony-stimulating factor (GM-CSF) signaling pathway; possibly by regulating glycosylation and/or targeting of proteins contributing to the viability and migration of neutrophils. This Bos taurus (Bovine) protein is Protein jagunal homolog 1 (JAGN1).